The following is a 120-amino-acid chain: Protein CcdB (120 aa).

Positions 3–118 (RVLVVDDAKF…KVLEAVSRVM (116 aa)) constitute a Response regulatory domain. D53 carries the post-translational modification 4-aspartylphosphate.

In Bacillus subtilis (strain 168), this protein is Protein CcdB (ccdB).